Here is a 129-residue protein sequence, read N- to C-terminus: Large ribosomal subunit protein bL12 (129 aa).

A disordered region spans residues 94–113; the sequence is TEGLPKTVKEKTSKSDAEDT.

It belongs to the bacterial ribosomal protein bL12 family. As to quaternary structure, homodimer. Part of the ribosomal stalk of the 50S ribosomal subunit. Forms a multimeric L10(L12)X complex, where L10 forms an elongated spine to which 2 to 4 L12 dimers bind in a sequential fashion. Binds GTP-bound translation factors.

In terms of biological role, forms part of the ribosomal stalk which helps the ribosome interact with GTP-bound translation factors. Is thus essential for accurate translation. The sequence is that of Large ribosomal subunit protein bL12 from Chlamydia pneumoniae (Chlamydophila pneumoniae).